A 339-amino-acid polypeptide reads, in one-letter code: Dipeptide transport system permease protein DppB (339 aa).

The Periplasmic segment spans residues 1–9; that stretch reads MLQFILRRL. The chain crosses the membrane as a helical span at residues 10 to 30; it reads GLVIPTFIGITLLTFAFVHMI. Over 31–102 the chain is Cytoplasmic; it reads PGDPVMIMAG…VPRFQATLEL (72 aa). The ABC transmembrane type-1 domain occupies 96-328; that stretch reads FQATLELGVC…LVNLLVDLLY (233 aa). Residues 103 to 123 traverse the membrane as a helical segment; it reads GVCAMIFATAVGIPVGVLAAV. Topologically, residues 124-135 are periplasmic; that stretch reads KRGSIFDHTAVG. The helical transmembrane segment at 136–156 threads the bilayer; that stretch reads LALTGYSMPIFWWGMMLIMLV. Residues 157-171 lie on the Cytoplasmic side of the membrane; that stretch reads SVHWNLTPVSGRVSD. A helical membrane pass occupies residues 172 to 192; it reads MVFLDDSNPLTGFMLIDTAIW. The Periplasmic portion of the chain corresponds to 193–200; sequence GEDGNFID. Residues 201–221 traverse the membrane as a helical segment; that stretch reads AVAHMILPAIVLGTIPLAVIV. At 222–259 the chain is on the cytoplasmic side; sequence RMTRSSMLEVLGEDYIRTARAKGLTRMRVIIVHALRNA. The chain crosses the membrane as a helical span at residues 260-280; the sequence is MLPVVTVIGLQVGTLLAGAIL. Over 281–309 the chain is Periplasmic; the sequence is TETIFSWPGLGRWLIDALQRRDYPVVQGG. A helical transmembrane segment spans residues 310-330; sequence VLLVATMIILVNLLVDLLYGV. Residues 331–339 are Cytoplasmic-facing; it reads VNPRIRHKK.

This sequence belongs to the binding-protein-dependent transport system permease family. OppBC subfamily. The complex is composed of two ATP-binding proteins (DppD and DppF), two transmembrane proteins (DppB and DppC) and a solute-binding protein (DppA).

It localises to the cell inner membrane. Part of the ABC transporter DppABCDF involved in dipeptide transport. Responsible for the translocation of the substrate across the membrane. The sequence is that of Dipeptide transport system permease protein DppB (dppB) from Escherichia coli O157:H7.